A 474-amino-acid polypeptide reads, in one-letter code: tRNA-2-methylthio-N(6)-dimethylallyladenosine synthase (474 aa).

The region spanning 3–120 (QKLHIKTWGC…LPEMINQIRA (118 aa)) is the MTTase N-terminal domain. The [4Fe-4S] cluster site is built by Cys-12, Cys-49, Cys-83, Cys-157, Cys-161, and Cys-164. Positions 143–375 (KAEGPTAFVS…QQRINNQAAQ (233 aa)) constitute a Radical SAM core domain. Positions 378–441 (RAMLGTEQRV…TNSLRGDVVR (64 aa)) constitute a TRAM domain.

It belongs to the methylthiotransferase family. MiaB subfamily. As to quaternary structure, monomer. [4Fe-4S] cluster is required as a cofactor.

The protein localises to the cytoplasm. It carries out the reaction N(6)-dimethylallyladenosine(37) in tRNA + (sulfur carrier)-SH + AH2 + 2 S-adenosyl-L-methionine = 2-methylsulfanyl-N(6)-dimethylallyladenosine(37) in tRNA + (sulfur carrier)-H + 5'-deoxyadenosine + L-methionine + A + S-adenosyl-L-homocysteine + 2 H(+). Functionally, catalyzes the methylthiolation of N6-(dimethylallyl)adenosine (i(6)A), leading to the formation of 2-methylthio-N6-(dimethylallyl)adenosine (ms(2)i(6)A) at position 37 in tRNAs that read codons beginning with uridine. In Mannheimia succiniciproducens (strain KCTC 0769BP / MBEL55E), this protein is tRNA-2-methylthio-N(6)-dimethylallyladenosine synthase.